The sequence spans 468 residues: 3-isopropylmalate dehydratase large subunit (468 aa).

[4Fe-4S] cluster is bound by residues Cys-347, Cys-407, and Cys-410.

It belongs to the aconitase/IPM isomerase family. LeuC type 1 subfamily. In terms of assembly, heterodimer of LeuC and LeuD. [4Fe-4S] cluster serves as cofactor.

It carries out the reaction (2R,3S)-3-isopropylmalate = (2S)-2-isopropylmalate. The protein operates within amino-acid biosynthesis; L-leucine biosynthesis; L-leucine from 3-methyl-2-oxobutanoate: step 2/4. In terms of biological role, catalyzes the isomerization between 2-isopropylmalate and 3-isopropylmalate, via the formation of 2-isopropylmaleate. In Synechococcus elongatus (strain ATCC 33912 / PCC 7942 / FACHB-805) (Anacystis nidulans R2), this protein is 3-isopropylmalate dehydratase large subunit.